The chain runs to 221 residues: uncharacterized protein (221 aa).

Residues 1–18 (MKRFLLLIILFGISFSFV) form the signal peptide.

This is an uncharacterized protein from Aquifex aeolicus (strain VF5).